Here is a 460-residue protein sequence, read N- to C-terminus: Cysteine--tRNA ligase (460 aa).

Cys28 provides a ligand contact to Zn(2+). The 'HIGH' region motif lies at Met30–His40. Cys209, His234, and Glu238 together coordinate Zn(2+). Residues Lys266–Ser270 carry the 'KMSKS' region motif. Position 269 (Lys269) interacts with ATP.

This sequence belongs to the class-I aminoacyl-tRNA synthetase family. Monomer. Zn(2+) is required as a cofactor.

It localises to the cytoplasm. It catalyses the reaction tRNA(Cys) + L-cysteine + ATP = L-cysteinyl-tRNA(Cys) + AMP + diphosphate. This is Cysteine--tRNA ligase from Pseudomonas aeruginosa (strain LESB58).